The following is a 347-amino-acid chain: GTP 3',8-cyclase (347 aa).

The Radical SAM core domain occupies 10-242; that stretch reads RLNRPIGVLR…ERINARWPLE (233 aa). Position 19 (Arg-19) interacts with GTP. Cys-26 and Cys-30 together coordinate [4Fe-4S] cluster. Residue Tyr-32 participates in S-adenosyl-L-methionine binding. [4Fe-4S] cluster is bound at residue Cys-33. Arg-65 is a binding site for GTP. Gly-69 serves as a coordination point for S-adenosyl-L-methionine. Thr-104 contributes to the GTP binding site. Ser-129 serves as a coordination point for S-adenosyl-L-methionine. Lys-178 serves as a coordination point for GTP. Met-212 contacts S-adenosyl-L-methionine. [4Fe-4S] cluster is bound by residues Cys-275 and Cys-278. 280-282 is a GTP binding site; the sequence is RLR. Cys-292 contacts [4Fe-4S] cluster.

Belongs to the radical SAM superfamily. MoaA family. As to quaternary structure, monomer and homodimer. It depends on [4Fe-4S] cluster as a cofactor.

The enzyme catalyses GTP + AH2 + S-adenosyl-L-methionine = (8S)-3',8-cyclo-7,8-dihydroguanosine 5'-triphosphate + 5'-deoxyadenosine + L-methionine + A + H(+). The protein operates within cofactor biosynthesis; molybdopterin biosynthesis. Functionally, catalyzes the cyclization of GTP to (8S)-3',8-cyclo-7,8-dihydroguanosine 5'-triphosphate. This is GTP 3',8-cyclase from Synechococcus sp. (strain CC9605).